A 496-amino-acid polypeptide reads, in one-letter code: Lysine--tRNA ligase (496 aa).

Residues glutamate 409 and glutamate 416 each coordinate Mg(2+).

The protein belongs to the class-II aminoacyl-tRNA synthetase family. Homodimer. Mg(2+) is required as a cofactor.

The protein resides in the cytoplasm. The catalysed reaction is tRNA(Lys) + L-lysine + ATP = L-lysyl-tRNA(Lys) + AMP + diphosphate. The sequence is that of Lysine--tRNA ligase from Streptococcus suis (strain 05ZYH33).